Consider the following 145-residue polypeptide: QFDKETMILHHDKHHATYVANANAALEKHPEIGENLEELLADVSAIPEDIRQALVNNGGGHLNHALFWELLSPEKTEVTSDVASAIDEAFGSFESFKDAFTTAATSRFGSGWAWLVVNKEGKLEVMSTANQDTPISEGKQPILGL.

Residues H10 and H64 each contribute to the Fe(3+) site. Mn(2+)-binding residues include H10 and H64.

This sequence belongs to the iron/manganese superoxide dismutase family. The cofactor is Mn(2+). Fe(3+) is required as a cofactor.

The catalysed reaction is 2 superoxide + 2 H(+) = H2O2 + O2. Its function is as follows. Destroys superoxide anion radicals which are normally produced within the cells and which are toxic to biological systems. Catalyzes the dismutation of superoxide anion radicals into O2 and H2O2 by successive reduction and oxidation of the transition metal ion at the active site. The polypeptide is Superoxide dismutase [Mn/Fe] (sodA) (Streptococcus porcinus).